Consider the following 189-residue polypeptide: Peroxiredoxin sll1621 (189 aa).

The Thioredoxin domain occupies 2 to 177 (TPERVPSVVF…MLAYLKGAEA (176 aa)). The active-site Cysteine sulfenic acid (-SOH) intermediate (for peroxiredoxin activity) is cysteine 55.

The protein belongs to the peroxiredoxin family. Prx5 subfamily. Monomer.

The enzyme catalyses a hydroperoxide + 2 glutathione = an alcohol + glutathione disulfide + H2O. In terms of biological role, thiol-specific peroxidase that catalyzes the reduction of hydrogen peroxide and organic hydroperoxides to water and alcohols, respectively. Plays a role in cell protection against oxidative stress by detoxifying peroxides. The polypeptide is Peroxiredoxin sll1621 (Synechocystis sp. (strain ATCC 27184 / PCC 6803 / Kazusa)).